A 327-amino-acid chain; its full sequence is MEKFLKYEIKVNNEQARANPNYGIFEVGPLESGFVITIGNAMRRVLLSCIPGASVFALSISGAKQEFAAVEGMKEDVTEVVLNFKQLVVKISDLLFEDGEMVEPPLERWPLLTVTAEKAGPVYAKDLECPAGFEVVNKDLYLFSLQTDKKVTVNVYVKQGRGFVTFLENREMINSLGIIATDSNFSPVLHCGYEVQELKTSKQKITDHLTFKIATNGAISAVDAFAMAAKILIEHLNPIVNVNESIKALNIIQEKAEERRVRSFAKQIEELDFTVRTFNCLKRSGIHTLQELLSKSLADIREIRNLGKKSEREIIKKVHELGLKLRS.

Positions 1-243 (MEKFLKYEIK…EHLNPIVNVN (243 aa)) are alpha N-terminal domain (alpha-NTD). Residues 260-327 (RVRSFAKQIE…VHELGLKLRS (68 aa)) are alpha C-terminal domain (alpha-CTD).

This sequence belongs to the RNA polymerase alpha chain family. Homodimer. The RNAP catalytic core consists of 2 alpha, 1 beta, 1 beta' and 1 omega subunit. When a sigma factor is associated with the core the holoenzyme is formed, which can initiate transcription.

The catalysed reaction is RNA(n) + a ribonucleoside 5'-triphosphate = RNA(n+1) + diphosphate. Functionally, DNA-dependent RNA polymerase catalyzes the transcription of DNA into RNA using the four ribonucleoside triphosphates as substrates. The protein is DNA-directed RNA polymerase subunit alpha of Mycoplasma pneumoniae (strain ATCC 29342 / M129 / Subtype 1) (Mycoplasmoides pneumoniae).